Reading from the N-terminus, the 239-residue chain is uncharacterized protein (239 aa).

In terms of domain architecture, S4 RNA-binding spans M1 to M65. Residue D103 is the Nucleophile of the active site.

It belongs to the pseudouridine synthase RsuA family.

It carries out the reaction a uridine in RNA = a pseudouridine in RNA. This is an uncharacterized protein from Bacillus subtilis (strain 168).